The primary structure comprises 177 residues: Peptide methionine sulfoxide reductase MsrA (177 aa).

The active site involves cysteine 10.

This sequence belongs to the MsrA Met sulfoxide reductase family.

The enzyme catalyses L-methionyl-[protein] + [thioredoxin]-disulfide + H2O = L-methionyl-(S)-S-oxide-[protein] + [thioredoxin]-dithiol. The catalysed reaction is [thioredoxin]-disulfide + L-methionine + H2O = L-methionine (S)-S-oxide + [thioredoxin]-dithiol. In terms of biological role, has an important function as a repair enzyme for proteins that have been inactivated by oxidation. Catalyzes the reversible oxidation-reduction of methionine sulfoxide in proteins to methionine. The protein is Peptide methionine sulfoxide reductase MsrA of Saccharolobus solfataricus (strain ATCC 35092 / DSM 1617 / JCM 11322 / P2) (Sulfolobus solfataricus).